The following is a 283-amino-acid chain: Non-selective voltage-gated ion channel VDAC3 (283 aa).

N-acetylcysteine is present on cysteine 2. Threonine 4 is subject to Phosphothreonine. N6-acetyllysine occurs at positions 12, 15, and 20. Transmembrane regions (beta stranded) follow at residues 26–35 (MVKIDLKTKS) and 39–47 (VEFSTSGHA). Residue lysine 53 forms a Glycyl lysine isopeptide (Lys-Gly) (interchain with G-Cter in ubiquitin) linkage. A run of 3 beta stranded transmembrane segments spans residues 54–64 (ASGNLETKYKV), 69–76 (LTFTQKWN), and 80–89 (TLGTEISWEN). Position 90 is an N6-acetyllysine (lysine 90). Residues 95 to 104 (LKLTLDTIFV) form a beta stranded membrane-spanning segment. Residues lysine 109 and lysine 110 each participate in a glycyl lysine isopeptide (Lys-Gly) (interchain with G-Cter in ubiquitin) cross-link. A run of 10 beta stranded transmembrane segments spans residues 111–120 (SGKLKASYRR), 123–130 (FSLGSNVD), 137–145 (TIYGWAVLA), 150–158 (LAGYQMSFD), 163–175 (KLSQNNFALGYKA), 178–185 (FQLHTHVN), 189–198 (EFGGSIYQKV), 202–211 (IETSINLAWT), 218–227 (RFGIAAKYKL), and 231–238 (TSLSAKVN). The residue at position 241 (serine 241) is a Phosphoserine. NAD(+) is bound by residues 242–244 (LIG) and 260–264 (SALID). A run of 2 beta stranded transmembrane segments spans residues 242–251 (LIGLGYTQTL) and 254–263 (GVKLTLSALI). Lysine 266 is modified (N6-acetyllysine; alternate). Lysine 266 is covalently cross-linked (Glycyl lysine isopeptide (Lys-Gly) (interchain with G-Cter in ubiquitin); alternate). Residues 273-282 (HKVGLGFELE) form a beta stranded membrane-spanning segment.

It belongs to the eukaryotic mitochondrial porin family. As to quaternary structure, interacts with ARMC12 in a TBC1D21-dependent manner. Interacts with MISFA. Post-translationally, ubiquitinated by PRKN during mitophagy, leading to its degradation and enhancement of mitophagy. Deubiquitinated by USP30. As to expression, highest levels of expression detected in testis, less but still abundant expression in heart, kidney, brain, and skeletal muscle.

The protein resides in the mitochondrion outer membrane. It localises to the membrane. The enzyme catalyses chloride(in) = chloride(out). It catalyses the reaction K(+)(in) = K(+)(out). Functionally, non-selective voltage-gated ion channel that mediates the transport of anions and cations through the mitochondrion outer membrane and plasma membrane. Forms a high-conducting channel with a stable open state and a voltage-induced closure with a mild preference for anions over cations. Involved in male fertility and sperm mitochondrial sheath formation. This Mus musculus (Mouse) protein is Non-selective voltage-gated ion channel VDAC3.